An 807-amino-acid polypeptide reads, in one-letter code: Serine/threonine-protein kinase B-raf (807 aa).

Low complexity-rich tracts occupy residues methionine 1–leucine 15 and serine 110–leucine 128. Disordered stretches follow at residues methionine 1–serine 36 and glycine 104–leucine 128. The 73-residue stretch at proline 155–leucine 227 folds into the RBD domain. A Phorbol-ester/DAG-type zinc finger spans residues threonine 234–cysteine 280. 8 residues coordinate Zn(2+): histidine 235, cysteine 248, cysteine 251, cysteine 261, cysteine 264, histidine 269, cysteine 272, and cysteine 280. Residues glutamate 303–alanine 313 are compositionally biased toward polar residues. Disordered stretches follow at residues glutamate 303 to asparagine 372 and serine 434 to aspartate 494. Positions serine 314–proline 328 are enriched in low complexity. Composition is skewed to basic and acidic residues over residues proline 348–serine 363 and glutamine 463–serine 487. Residues isoleucine 497 to leucine 757 form the Protein kinase domain. ATP-binding positions include isoleucine 503–valine 511 and lysine 523. Aspartate 616 functions as the Proton acceptor in the catalytic mechanism. Serine 790 is modified (phosphoserine; by MAPK1). Threonine 793 carries the post-translational modification Phosphothreonine; by MAPK1.

It belongs to the protein kinase superfamily. TKL Ser/Thr protein kinase family. RAF subfamily. Zn(2+) serves as cofactor. Post-translationally, phosphorylated. Expressed preferentially in neural tissue.

The protein localises to the nucleus. Its subcellular location is the cytoplasm. The protein resides in the cell membrane. The enzyme catalyses L-seryl-[protein] + ATP = O-phospho-L-seryl-[protein] + ADP + H(+). The catalysed reaction is L-threonyl-[protein] + ATP = O-phospho-L-threonyl-[protein] + ADP + H(+). In quiescent cells, maintained in an inactive state via an intramolecular interaction between the protein kinase and N-terminal domains. Following mitogen-mediated cell activation, binds via its RGB domain to active HRAS (GTP-bound) which releases the inhibitory intramolecular interaction between the two domains. This allows the MAP2K1-mediated dimerization of KSR1 or KSR2, and BRAF which activates BRAF. In terms of biological role, protein kinase involved in the activation of the MAP signaling cascade. May play a role in transducing specific signals in neural cells. The chain is Serine/threonine-protein kinase B-raf from Coturnix japonica (Japanese quail).